Consider the following 299-residue polypeptide: Pyridoxal 5'-phosphate synthase subunit PdxS (299 aa).

Asp24 contributes to the D-ribose 5-phosphate binding site. Lys81 (schiff-base intermediate with D-ribose 5-phosphate) is an active-site residue. A D-ribose 5-phosphate-binding site is contributed by Gly153. Position 165 (Arg165) interacts with D-glyceraldehyde 3-phosphate. D-ribose 5-phosphate-binding positions include Gly219 and 240–241; that span reads GS.

The protein belongs to the PdxS/SNZ family. In terms of assembly, in the presence of PdxT, forms a dodecamer of heterodimers.

The catalysed reaction is aldehydo-D-ribose 5-phosphate + D-glyceraldehyde 3-phosphate + L-glutamine = pyridoxal 5'-phosphate + L-glutamate + phosphate + 3 H2O + H(+). It functions in the pathway cofactor biosynthesis; pyridoxal 5'-phosphate biosynthesis. Its function is as follows. Catalyzes the formation of pyridoxal 5'-phosphate from ribose 5-phosphate (RBP), glyceraldehyde 3-phosphate (G3P) and ammonia. The ammonia is provided by the PdxT subunit. Can also use ribulose 5-phosphate and dihydroxyacetone phosphate as substrates, resulting from enzyme-catalyzed isomerization of RBP and G3P, respectively. The protein is Pyridoxal 5'-phosphate synthase subunit PdxS of Methanococcus maripaludis (strain C6 / ATCC BAA-1332).